Here is a 218-residue protein sequence, read N- to C-terminus: Glutathione S-transferase Mu 1 (218 aa).

Positions 2-88 constitute a GST N-terminal domain; it reads PMTLGYWDVR…YLARKHGLCG (87 aa). Glutathione is bound by residues 7–8, 46–50, 59–60, and 72–73; these read YW, WLSEK, NL, and QS. The GST C-terminal domain occupies 90-208; that stretch reads TEEERIRVDI…KSSRFIRVPV (119 aa). Substrate is bound at residue Tyr-116.

The protein belongs to the GST superfamily. Mu family. As to quaternary structure, homodimer. As to expression, well expressed in rabbit liver, brain and kidney.

Its subcellular location is the cytoplasm. The catalysed reaction is RX + glutathione = an S-substituted glutathione + a halide anion + H(+). In terms of biological role, conjugation of reduced glutathione to a wide number of exogenous and endogenous hydrophobic electrophiles. This Oryctolagus cuniculus (Rabbit) protein is Glutathione S-transferase Mu 1.